We begin with the raw amino-acid sequence, 37 residues long: Large ribosomal subunit protein bL36 (37 aa).

The protein belongs to the bacterial ribosomal protein bL36 family.

The polypeptide is Large ribosomal subunit protein bL36 (Trichlorobacter lovleyi (strain ATCC BAA-1151 / DSM 17278 / SZ) (Geobacter lovleyi)).